Reading from the N-terminus, the 405-residue chain is Enoyl-[acyl-carrier-protein] reductase [NADH] (405 aa).

NAD(+) contacts are provided by residues 48–53 (GASSGY), 74–75 (FE), 111–112 (DA), and 140–141 (LA). Tyrosine 226 provides a ligand contact to substrate. The Proton donor role is filled by tyrosine 236. Residues lysine 245 and 274 to 276 (VVT) contribute to the NAD(+) site.

The protein belongs to the TER reductase family. In terms of assembly, monomer.

The catalysed reaction is a 2,3-saturated acyl-[ACP] + NAD(+) = a (2E)-enoyl-[ACP] + NADH + H(+). Its pathway is lipid metabolism; fatty acid biosynthesis. Involved in the final reduction of the elongation cycle of fatty acid synthesis (FAS II). Catalyzes the reduction of a carbon-carbon double bond in an enoyl moiety that is covalently linked to an acyl carrier protein (ACP). This Xanthomonas oryzae pv. oryzae (strain PXO99A) protein is Enoyl-[acyl-carrier-protein] reductase [NADH].